The primary structure comprises 118 residues: Autophagy-related protein 8 (118 aa).

Residue glycine 116 is the site of Phosphatidylethanolamine amidated glycine attachment. The propeptide at 117–118 (EA) is removed in mature form.

The protein belongs to the ATG8 family. Conjugation to phosphatidylethanolamine (PE) leads to homodimerization. Interacts with ATG1, ATG3, ATG4, ATG7 and ATG12. Post-translationally, the C-terminal Glu-117 and Ala-118 residues of ATG8 are removed by ATG4 to expose Gly-116 at the C-terminus. This Gly-116 forms then a thioester bond with the 'Cys-550' of ATG7 (E1-like activating enzyme) before being transferred to the 'Cys-244' of ATG3 (the specific E2 conjugating enzyme), in order to be finally amidated with phosphatidylethanolamine. This lipid modification anchors ATG8 to membranes and can be reversed by ATG4, releasing soluble ATG8.

The protein localises to the cytoplasmic vesicle. It localises to the cvt vesicle membrane. Its subcellular location is the autophagosome membrane. It is found in the vacuole membrane. In terms of biological role, ubiquitin-like modifier involved in cytoplasm to vacuole transport (Cvt) vesicles and autophagosome formation. With ATG4, mediates the delivery of the vesicles and autophagosomes to the vacuole via the microtubule cytoskeleton. Required for selective autophagic degradation of the nucleus (nucleophagy) as well as for mitophagy which contributes to regulate mitochondrial quantity and quality by eliminating the mitochondria to a basal level to fulfill cellular energy requirements and preventing excess ROS production. Also participates in membrane fusion events that take place in the early secretory pathway. Also involved in endoplasmic reticulum-specific autophagic process and is essential for the survival of cells subjected to severe ER stress. The ATG8-PE conjugate mediates tethering between adjacent membranes and stimulates membrane hemifusion, leading to expansion of the autophagosomal membrane during autophagy. Moreover not only conjugation, but also subsequent ATG8-PE deconjugation is an important step required to facilitate multiple events during macroautophagy, and especially for efficient autophagosome biogenesis, the assembly of ATG9-containing tubulovesicular clusters into phagophores/autophagosomes, and for the disassembly of PAS-associated ATG components. Autophagy is required for proper vegetative growth, asexual/sexual reproduction, and full virulence. Autophagy is particularly involved in the biosynthesis of deoxynivalenol (DON), an important virulence determinant. This is Autophagy-related protein 8 from Gibberella zeae (strain ATCC MYA-4620 / CBS 123657 / FGSC 9075 / NRRL 31084 / PH-1) (Wheat head blight fungus).